The primary structure comprises 418 residues: Gamma-glutamyl phosphate reductase (418 aa).

Belongs to the gamma-glutamyl phosphate reductase family.

Its subcellular location is the cytoplasm. The enzyme catalyses L-glutamate 5-semialdehyde + phosphate + NADP(+) = L-glutamyl 5-phosphate + NADPH + H(+). Its pathway is amino-acid biosynthesis; L-proline biosynthesis; L-glutamate 5-semialdehyde from L-glutamate: step 2/2. Its function is as follows. Catalyzes the NADPH-dependent reduction of L-glutamate 5-phosphate into L-glutamate 5-semialdehyde and phosphate. The product spontaneously undergoes cyclization to form 1-pyrroline-5-carboxylate. The polypeptide is Gamma-glutamyl phosphate reductase (Thermobifida fusca (strain YX)).